The sequence spans 244 residues: tRNA (guanine-N(7)-)-methyltransferase (244 aa).

Residues 1–24 (MTDSHVPHPESPAVEEGEERPHRR) are disordered. Positions 74, 99, 126, and 149 each coordinate S-adenosyl-L-methionine. The active site involves Asp149. Substrate is bound by residues Lys153, Asp185, and 222-225 (TKFE).

Belongs to the class I-like SAM-binding methyltransferase superfamily. TrmB family.

The enzyme catalyses guanosine(46) in tRNA + S-adenosyl-L-methionine = N(7)-methylguanosine(46) in tRNA + S-adenosyl-L-homocysteine. It participates in tRNA modification; N(7)-methylguanine-tRNA biosynthesis. Its function is as follows. Catalyzes the formation of N(7)-methylguanine at position 46 (m7G46) in tRNA. This chain is tRNA (guanine-N(7)-)-methyltransferase, found in Pseudomonas savastanoi pv. phaseolicola (strain 1448A / Race 6) (Pseudomonas syringae pv. phaseolicola (strain 1448A / Race 6)).